Reading from the N-terminus, the 248-residue chain is tRNA pseudouridine synthase A (248 aa).

The active-site Nucleophile is the Asp52. Tyr111 lines the substrate pocket.

The protein belongs to the tRNA pseudouridine synthase TruA family. As to quaternary structure, homodimer.

The catalysed reaction is uridine(38/39/40) in tRNA = pseudouridine(38/39/40) in tRNA. Formation of pseudouridine at positions 38, 39 and 40 in the anticodon stem and loop of transfer RNAs. This Methylocella silvestris (strain DSM 15510 / CIP 108128 / LMG 27833 / NCIMB 13906 / BL2) protein is tRNA pseudouridine synthase A.